The chain runs to 241 residues: Histidine utilization repressor (241 aa).

An HTH gntR-type domain is found at 11-79 (APFYEKVKQA…QGVGTFVAEP (69 aa)). Residues 39-58 (EAELVAQFGFSRMTINRALR) constitute a DNA-binding region (H-T-H motif).

It functions in the pathway amino-acid degradation; L-histidine degradation into L-glutamate [regulation]. Functionally, repressor which binds to the hutP region in the histidine utilization (hut) operon. It blocks the expression of all the hut genes in the absence of inducer. The sequence is that of Histidine utilization repressor (hutC) from Klebsiella aerogenes (Enterobacter aerogenes).